Reading from the N-terminus, the 521-residue chain is RING-type E3 ubiquitin-protein ligase PPIL2 (521 aa).

Residues 35–108 (RRLPFDHCSL…GQYHCPVLYS (74 aa)) form the U-box domain. Residues 197-217 (LKNTNSETRETLQELYKEFKG) adopt a coiled-coil conformation. Lys-216 participates in a covalent cross-link: Glycyl lysine isopeptide (Lys-Gly) (interchain with G-Cter in SUMO2). Positions 278-433 (KKGYVRLHTN…EEVLICTTTV (156 aa)) constitute a PPIase cyclophilin-type domain. Over residues 447–462 (QERKKTQHQVDPEAKV) the composition is skewed to basic and acidic residues. A disordered region spans residues 447-521 (QERKKTQHQV…SRGFGDFSSW (75 aa)). Residues 465–478 (SQPQPGNQGPQTYR) show a composition bias toward polar residues. N6-acetyllysine is present on Lys-483.

Belongs to the cyclophilin-type PPIase family. PPIL2 subfamily. Component of the minor spliceosome, which splices U12-type introns. Within this complex, interacts with PRPF8/PRP8, EFTUD2/SNU114 and PLRG1. Interacts with isoform 2 of BSG. Interacts (via the PPIase cyclophilin-type domain) with CRNKL1; they may form a trimeric complex with HSP90.

It is found in the nucleus. It carries out the reaction S-ubiquitinyl-[E2 ubiquitin-conjugating enzyme]-L-cysteine + [acceptor protein]-L-lysine = [E2 ubiquitin-conjugating enzyme]-L-cysteine + N(6)-ubiquitinyl-[acceptor protein]-L-lysine.. It functions in the pathway protein modification; protein ubiquitination. Its function is as follows. Has a ubiquitin-protein ligase activity acting as an E3 ubiquitin protein ligase or as an ubiquitin-ubiquitin ligase promoting elongation of ubiquitin chains on substrates. By mediating 'Lys-48'-linked polyubiquitination of proteins could target them for proteasomal degradation. May also function as a chaperone, playing a role in transport to the cell membrane of BSG/Basigin for instance. Probable inactive PPIase with no peptidyl-prolyl cis-trans isomerase activity. As a component of the minor spliceosome, involved in the splicing of U12-type introns in pre-mRNAs. The polypeptide is RING-type E3 ubiquitin-protein ligase PPIL2 (Mus musculus (Mouse)).